The following is a 323-amino-acid chain: Dihydrodiol dehydrogenase 3 (323 aa).

NADP(+) contacts are provided by residues 20–24 and Asp-50; that span reads GFGTF. Tyr-55 acts as the Proton donor in catalysis. Residue His-117 participates in substrate binding. NADP(+)-binding positions include 166-167, Gln-190, 216-221, and 270-280; these read SN, YGALGS, and KSYNKKRIKEN.

The protein belongs to the aldo/keto reductase family.

It is found in the cytoplasm. This chain is Dihydrodiol dehydrogenase 3, found in Bos taurus (Bovine).